A 306-amino-acid chain; its full sequence is UDP-N-acetylenolpyruvoylglucosamine reductase (306 aa).

The FAD-binding PCMH-type domain maps to 28–193; that stretch reads KVGGPADFLA…VSAKFSLKPG (166 aa). R172 is an active-site residue. The Proton donor role is filled by S222. The active site involves E292.

It belongs to the MurB family. It depends on FAD as a cofactor.

The protein resides in the cytoplasm. It carries out the reaction UDP-N-acetyl-alpha-D-muramate + NADP(+) = UDP-N-acetyl-3-O-(1-carboxyvinyl)-alpha-D-glucosamine + NADPH + H(+). It functions in the pathway cell wall biogenesis; peptidoglycan biosynthesis. Its function is as follows. Cell wall formation. In Streptococcus mutans serotype c (strain ATCC 700610 / UA159), this protein is UDP-N-acetylenolpyruvoylglucosamine reductase.